Reading from the N-terminus, the 227-residue chain is Probable septum site-determining protein MinC (227 aa).

Belongs to the MinC family. Interacts with MinD and FtsZ.

In terms of biological role, cell division inhibitor that blocks the formation of polar Z ring septums. Rapidly oscillates between the poles of the cell to destabilize FtsZ filaments that have formed before they mature into polar Z rings. Prevents FtsZ polymerization. The sequence is that of Probable septum site-determining protein MinC from Laribacter hongkongensis (strain HLHK9).